The chain runs to 41 residues: Chymotrypsin inhibitor (41 aa).

In terms of biological role, inhibits chymotrypsin. The sequence is that of Chymotrypsin inhibitor from Eisenia hortensis (European nightcrawler).